Reading from the N-terminus, the 108-residue chain is Class I hydrophobin 3 (108 aa).

A signal peptide spans 1-17; that stretch reads MFFQTTIVAALASLAVA. Intrachain disulfides connect cysteine 28–cysteine 87, cysteine 35–cysteine 81, cysteine 36–cysteine 69, and cysteine 88–cysteine 101. N-linked (GlcNAc...) asparagine glycosylation occurs at asparagine 37.

Belongs to the fungal hydrophobin family. In terms of assembly, self-assembles to form functional amyloid fibrils called rodlets. Self-assembly into fibrillar rodlets occurs spontaneously at hydrophobic:hydrophilic interfaces and the rodlets further associate laterally to form amphipathic monolayers.

The protein resides in the secreted. The protein localises to the cell wall. Functionally, aerial growth, conidiation, and dispersal of filamentous fungi in the environment rely upon a capability of their secreting small amphipathic proteins called hydrophobins (HPBs) with low sequence identity. Class I can self-assemble into an outermost layer of rodlet bundles on aerial cell surfaces, conferring cellular hydrophobicity that supports fungal growth, development and dispersal; whereas Class II form highly ordered films at water-air interfaces through intermolecular interactions but contribute nothing to the rodlet structure. Vmh3 is a class I hydrophobin that is essential for the maintenance of the surface hydrophobicity of the mycelium and might be involved in the development of fruiting bodies. Plays an important role in hyphal resistance against environmental stress. Necessary for the efficient biodegradation of lignin. In Pleurotus ostreatus (strain PC15) (Oyster mushroom), this protein is Class I hydrophobin 3.